The following is a 352-amino-acid chain: MQNRQVANATKVAVAGASGYAGGEILRLLLGHPAYADGRLRIGALTAATSAGSTLGEHHPHLTPLAHRVVEPTEAAVLGGHDAVFLALPHGHSAVLAQQLSPETLIIDCGADFRLTDAAVWERFYGSSHAGSWPYGLPELPGARDQLRGTRRIAVPGCYPTAALLALFPALAADLIEPAVTVVAVSGTSGAGRAATTDLLGAEVIGSARAYNIAGVHRHTPEIAQGLRAVTDRDVSVSFTPVLIPASRGILATCTARTRSPLSQLRAAYEKAYHAEPFIYLMPEGQLPRTGAVIGSNAAHIAVAVDEDAQTFVAIAAIDNLVKGTAGAAVQSMNLALGWPETDGLSVVGVAP.

Cysteine 158 is a catalytic residue.

This sequence belongs to the NAGSA dehydrogenase family. Type 1 subfamily.

The protein resides in the cytoplasm. The catalysed reaction is N-acetyl-L-glutamate 5-semialdehyde + phosphate + NADP(+) = N-acetyl-L-glutamyl 5-phosphate + NADPH + H(+). It functions in the pathway amino-acid biosynthesis; L-arginine biosynthesis; N(2)-acetyl-L-ornithine from L-glutamate: step 3/4. Catalyzes the NADPH-dependent reduction of N-acetyl-5-glutamyl phosphate to yield N-acetyl-L-glutamate 5-semialdehyde. The chain is N-acetyl-gamma-glutamyl-phosphate reductase from Mycobacterium bovis (strain BCG / Tokyo 172 / ATCC 35737 / TMC 1019).